A 177-amino-acid chain; its full sequence is Interleukin-25 (177 aa).

The first 32 residues, 1 to 32, serve as a signal peptide directing secretion; the sequence is MRERPRLGEDSSLISLFLQVVAFLAMVMGTHT. The tract at residues 58–81 is disordered; it reads PVPPLEPARPNRHPESCRASEDGP. Positions 69 to 78 are enriched in basic and acidic residues; sequence RHPESCRASE. Intrachain disulfides connect Cys110/Cys168 and Cys115/Cys170. Asn136 carries an N-linked (GlcNAc...) asparagine glycan.

Belongs to the IL-17 family. In terms of tissue distribution, expressed at low levels in several tissues, including brain, kidney, lung, prostate, testis, spinal cord, adrenal gland, and trachea.

The protein resides in the secreted. Cytokine produced by various cells such as eosinophils, T-helper type 2 (Th2) cells or epithelial cells that plays a role in internal safety of adaptive immune responses by regulating cytokine production. Promotes and augments T-helper type 2 responses locally or systemically. Exerts its activity via its receptor composed of IL17RA and IL17RB for signal transduction. In turn, stimulates the JAK2-STAT5A pathway and promotes the secretion of type-2 associated cytokines including IL4, IL9 and IL13. Also induces the release of IL8, and IL6 from eosinophils through the combined activation of MAPK and NF-kappa-B pathways. Inhibits the differentiation of T-helper (Th17) cells via the production of IL4, IL5 and IL13. In Homo sapiens (Human), this protein is Interleukin-25 (IL25).